A 290-amino-acid polypeptide reads, in one-letter code: Oxaloacetate decarboxylase (290 aa).

Position 53 (Ser53) interacts with substrate. Residue Asp91 participates in Mg(2+) binding. Substrate is bound by residues Arg162 and His238.

Belongs to the isocitrate lyase/PEP mutase superfamily. Oxaloacetate decarboxylase family. Homotetramer; dimer of dimers. It depends on Mg(2+) as a cofactor.

It catalyses the reaction oxaloacetate + H(+) = pyruvate + CO2. Its function is as follows. Catalyzes the decarboxylation of oxaloacetate into pyruvate. Seems to play a role in maintaining cellular concentrations of bicarbonate and pyruvate. This Ectopseudomonas mendocina (strain ymp) (Pseudomonas mendocina) protein is Oxaloacetate decarboxylase.